The following is a 1140-amino-acid chain: Envelopment polyprotein (1140 aa).

Residues methionine 1–alanine 17 form the signal peptide. Topologically, residues glycine 18–valine 480 are lumenal. 6 disulfides stabilise this stretch: cysteine 30-cysteine 155, cysteine 64-cysteine 161, cysteine 113-cysteine 132, cysteine 137-cysteine 142, cysteine 179-cysteine 189, and cysteine 214-cysteine 251. Asparagine 138 carries N-linked (GlcNAc...) asparagine; by host glycosylation. Asparagine 351 carries an N-linked (GlcNAc...) asparagine; by host glycan. 4 cysteine pairs are disulfide-bonded: cysteine 380–cysteine 439, cysteine 384–cysteine 393, cysteine 409–cysteine 428, and cysteine 456–cysteine 479. A glycan (N-linked (GlcNAc...) asparagine; by host) is linked at asparagine 403. Residues alanine 490–leucine 510 traverse the membrane as a helical segment. Residues lysine 511–cysteine 631 lie on the Cytoplasmic side of the membrane. Positions cysteine 520–lysine 537 are binding to the ribonucleoprotein. CCHC-type zinc fingers lie at residues cysteine 549–cysteine 569 and cysteine 574–cysteine 595. 3 binding to the ribonucleoprotein regions span residues phenylalanine 592–leucine 609, lysine 596–lysine 607, and arginine 615–serine 629. Residues arginine 615 to glycine 638 form the ITAM domain. Phosphotyrosine is present on residues tyrosine 619 and tyrosine 632. A YxxL motif is present at residues tyrosine 619–leucine 622. A helical membrane pass occupies residues tyrosine 632–alanine 652. Topologically, residues aspartate 653–asparagine 1108 are lumenal. Cystine bridges form between cysteine 739/cysteine 774, cysteine 743/cysteine 781, cysteine 755/cysteine 888, cysteine 769/cysteine 899, cysteine 784/cysteine 907, cysteine 810/cysteine 819, cysteine 827/cysteine 836, and cysteine 867/cysteine 871. Residues tyrosine 761–cysteine 781 are fusion loop. A glycan (N-linked (GlcNAc...) asparagine; by host) is linked at asparagine 931. Disulfide bonds link cysteine 973–cysteine 1003, cysteine 996–cysteine 1048, cysteine 1013–cysteine 1018, cysteine 1049–cysteine 1054, and cysteine 1088–cysteine 1092. Residues tryptophan 1109–phenylalanine 1129 traverse the membrane as a helical segment. The tract at residues leucine 1125–asparagine 1140 is binding to the ribonucleoprotein. Topologically, residues cysteine 1130–asparagine 1140 are cytoplasmic.

Belongs to the hantavirus envelope glycoprotein family. In terms of assembly, homodimer. Homotetramer; forms heterotetrameric Gn-Gc spikes in the pre-fusion conformation. Interacts (via C-terminus) with the nucleoprotein. Interacts with host TUFM; this interaction contributes to the virus-induced degradation of mitochondria by autophagy, which leads to degradation of host MAVS and inhibition of type I interferon (IFN) responses. Interacts with host MAP1LC3B; this interaction contributes to the virus-induced degradation of mitochondria by autophagy, which leads to degradation of host MAVS and inhibition of type I interferon (IFN) responses. As to quaternary structure, homodimer. Homotetramer; forms heterotetrameric Gn-Gc spikes in the pre-fusion conformation. Homotrimer; forms homotrimer in the post-fusion conformation at acidic pH. Interacts (via C-terminus) with the nucleoprotein. In terms of processing, envelope polyprotein precursor is quickly cleaved in vivo just after synthesis, presumably by host signal peptidase.

It is found in the virion membrane. It localises to the host cell surface. Its subcellular location is the host Golgi apparatus membrane. The protein localises to the host endoplasmic reticulum membrane. The protein resides in the host mitochondrion. In terms of biological role, forms homotetramers with glycoprotein C at the surface of the virion. Attaches the virion to host cell receptors including integrin ITGAV/ITGB3. This attachment induces virion internalization predominantly through clathrin-dependent endocytosis. Mediates the assembly and budding of infectious virus particles through its interaction with the nucleocapsid protein and the viral genome. May dysregulate normal immune and endothelial cell responses through an ITAM motif. Translocates to mitochondria, binds to host TUFM and recruits MAP1LC3B. These interactions induce mitochondrial autophagy and therefore destruction of host MAVS leading to inhibition of type I interferon (IFN) responses. Concomitant breakdown of glycoprotein N is apparently prevented by the nucleoprotein that may inhibit Gn-stimulated autophagosome-lysosome fusion. Interacts with the viral genomic RNA. Functionally, forms homotetramers with glycoprotein N at the surface of the virion. Attaches the virion to host cell receptors including integrin ITGAV/ITGB3. This attachment induces virion internalization predominantly through clathrin-dependent endocytosis. Class II fusion protein that promotes fusion of viral membrane with host endosomal membrane after endocytosis of the virion. The sequence is that of Envelopment polyprotein (GP) from Sin Nombre orthohantavirus (SNV).